Consider the following 630-residue polypeptide: Arginine--tRNA ligase (630 aa).

A 'HIGH' region motif is present at residues 120-130 (ANPIHPLHIGH).

This sequence belongs to the class-I aminoacyl-tRNA synthetase family.

Its subcellular location is the cytoplasm. The enzyme catalyses tRNA(Arg) + L-arginine + ATP = L-arginyl-tRNA(Arg) + AMP + diphosphate. The polypeptide is Arginine--tRNA ligase (Pyrobaculum arsenaticum (strain DSM 13514 / JCM 11321 / PZ6)).